Reading from the N-terminus, the 735-residue chain is Glycogen [starch] synthase, muscle (735 aa).

Ser8 bears the Phosphoserine; by AMPK and PKA mark. Ser11 is subject to Phosphoserine. Lys39 contacts UDP. Positions 205 and 211 each coordinate UDP-alpha-D-glucose. Alpha-D-glucose 6-phosphate contacts are provided by His291, Glu292, Gln294, His297, and Lys301. Arg331 serves as a coordination point for UDP. Residue Arg331 coordinates UDP-alpha-D-glucose. Residue Ser412 is modified to Phosphoserine. His501 is an alpha-D-glucose 6-phosphate binding site. UDP-alpha-D-glucose-binding residues include Glu510, Trp512, and Gly513. A UDP-binding site is contributed by Thr515. Alpha-D-glucose 6-phosphate is bound by residues Arg582 and Arg586. Residues 629–735 (DATQGYRYPR…PASSLGEERN (107 aa)) are disordered. Position 641 is a phosphoserine; by DYRK2, GSK3-alpha, GSK3-beta and PASK (Ser641). Phosphoserine; by GSK3-alpha and GSK3-beta occurs at positions 645 and 649. The residue at position 652 (Ser652) is a Phosphoserine. Ser653 bears the Phosphoserine; by GSK3-alpha and GSK3-beta mark. At Ser657 the chain carries Phosphoserine; by CK2. The segment covering 658 to 681 (EDEEEPRDGLPEEDGERYDEDEEA) has biased composition (acidic residues). The span at 682–695 (AKDRRNIRAPEWPR) shows a compositional bias: basic and acidic residues. Ser698 is modified (phosphoserine). Positions 698-735 (SCTSSSGGSKRSNSVDTSSLSTPSEPLSPASSLGEERN) are enriched in low complexity. Residue Thr700 is modified to Phosphothreonine. Phosphoserine occurs at positions 709 and 711. Thr719 is subject to Phosphothreonine. Ser725 and Ser729 each carry phosphoserine.

The protein belongs to the glycosyltransferase 3 family. As to quaternary structure, part of the GYS1-GYG1 complex, a heterooctamer composed of a tetramer of GYS1 and 2 dimers of GYG1, where each GYS1 protomer binds to one GYG1 subunit (via GYG1 C-terminus); the GYS1 tetramer may dissociate from GYG1 dimers to continue glycogen polymerization on its own. In terms of processing, phosphorylation at Ser-8 is required for modification of Ser-11 by casein kinase I. Post-translationally, phosphorylated at Ser-641 by PASK, leading to inactivation; phosphorylation by PASK is inhibited by glycogen. Dephosphorylation at Ser-641 and Ser-645 by PP1 activates the enzyme. Phosphorylation at Ser-8 by AMPK inactivates the enzyme activity. Phosphorylated at Ser-641 by DYRK2, leading to inactivation. Primed phosphorylation at Ser-657 (site 5) by CSNK2A1 and CSNK2A2 is required for inhibitory phosphorylation at Ser-641 (site 3a), Ser-645 (site 3b), Ser-649 (site 3c) and Ser-653 (site 4) by GSK3A and GSK3B.

The enzyme catalyses [(1-&gt;4)-alpha-D-glucosyl](n) + UDP-alpha-D-glucose = [(1-&gt;4)-alpha-D-glucosyl](n+1) + UDP + H(+). It functions in the pathway glycan biosynthesis; glycogen biosynthesis. Allosteric activation by glucose-6-phosphate. Phosphorylation reduces the activity towards UDP-glucose. When in the non-phosphorylated state, glycogen synthase does not require glucose-6-phosphate as an allosteric activator; when phosphorylated it does. Functionally, glycogen synthase participates in the glycogen biosynthetic process along with glycogenin and glycogen branching enzyme. Extends the primer composed of a few glucose units formed by glycogenin by adding new glucose units to it. In this context, glycogen synthase transfers the glycosyl residue from UDP-Glc to the non-reducing end of alpha-1,4-glucan. The sequence is that of Glycogen [starch] synthase, muscle from Oryctolagus cuniculus (Rabbit).